Reading from the N-terminus, the 623-residue chain is Kelch repeat and BTB domain-containing protein 11 (623 aa).

Positions 1-129 are disordered; sequence MEHAVAPCVL…PEEPGEPAPV (129 aa). A compositionally biased stretch (low complexity) spans 12–31; it reads PGTEPGAAGESESEGAASPA. Residues 42-55 are compositionally biased toward polar residues; it reads CFSSGEESPPQSLA. A phosphoserine mark is found at serine 64, serine 67, serine 87, and serine 107. The span at 79–91 shows a compositional bias: low complexity; the sequence is EAGSAGAASPEEL. The BTB domain maps to 140–196; the sequence is PDLVLEVSGRRLRAHKAVLAARSDYFRARASRDVLRVQGVSLTALRLLLADAYSGRM. Kelch repeat units lie at residues 311 to 359, 360 to 412, 413 to 455, and 458 to 500; these read RPQS…VLYN, YLFV…ALDG, HLYA…ATTC, and EIYV…ALDG.

In Homo sapiens (Human), this protein is Kelch repeat and BTB domain-containing protein 11 (KBTBD11).